We begin with the raw amino-acid sequence, 429 residues long: Adenylosuccinate synthetase (429 aa).

Residues 12-18 (GDEGKGK) and 40-42 (GHT) contribute to the GTP site. Residue Asp-13 is the Proton acceptor of the active site. The Mg(2+) site is built by Asp-13 and Gly-40. Residues 13 to 16 (DEGK), 38 to 41 (NAGH), Thr-128, Arg-142, Gln-223, Thr-238, and Arg-302 each bind IMP. The Proton donor role is filled by His-41. 298–304 (TTTGRPR) is a substrate binding site. GTP contacts are provided by residues Arg-304, 330 to 332 (SID), and 412 to 414 (SVG).

This sequence belongs to the adenylosuccinate synthetase family. Homodimer. Mg(2+) serves as cofactor.

The protein localises to the cytoplasm. The enzyme catalyses IMP + L-aspartate + GTP = N(6)-(1,2-dicarboxyethyl)-AMP + GDP + phosphate + 2 H(+). The protein operates within purine metabolism; AMP biosynthesis via de novo pathway; AMP from IMP: step 1/2. Plays an important role in the de novo pathway of purine nucleotide biosynthesis. Catalyzes the first committed step in the biosynthesis of AMP from IMP. The polypeptide is Adenylosuccinate synthetase (Bacillus cereus (strain ATCC 10987 / NRS 248)).